We begin with the raw amino-acid sequence, 232 residues long: Adenosylcobinamide-GDP ribazoletransferase (232 aa).

6 consecutive transmembrane segments (helical) span residues 32-52 (PIYF…GGSF), 54-74 (NFLL…LFHF), 102-122 (VGPF…TLYL), 126-146 (PITF…LMFF), 172-192 (FFLL…VVTV), and 212-232 (DVLG…LGVV).

This sequence belongs to the CobS family. The cofactor is Mg(2+).

It is found in the cell inner membrane. It carries out the reaction alpha-ribazole + adenosylcob(III)inamide-GDP = adenosylcob(III)alamin + GMP + H(+). The catalysed reaction is alpha-ribazole 5'-phosphate + adenosylcob(III)inamide-GDP = adenosylcob(III)alamin 5'-phosphate + GMP + H(+). Its pathway is cofactor biosynthesis; adenosylcobalamin biosynthesis; adenosylcobalamin from cob(II)yrinate a,c-diamide: step 7/7. Its function is as follows. Joins adenosylcobinamide-GDP and alpha-ribazole to generate adenosylcobalamin (Ado-cobalamin). Also synthesizes adenosylcobalamin 5'-phosphate from adenosylcobinamide-GDP and alpha-ribazole 5'-phosphate. This chain is Adenosylcobinamide-GDP ribazoletransferase, found in Thermosipho melanesiensis (strain DSM 12029 / CIP 104789 / BI429).